We begin with the raw amino-acid sequence, 337 residues long: RNA 3'-terminal phosphate cyclase (337 aa).

ATP contacts are provided by residues glutamine 101 and 282-285 (HMSD). The Tele-AMP-histidine intermediate role is filled by histidine 306.

The protein belongs to the RNA 3'-terminal cyclase family. Type 1 subfamily.

Its subcellular location is the cytoplasm. The catalysed reaction is a 3'-end 3'-phospho-ribonucleotide-RNA + ATP = a 3'-end 2',3'-cyclophospho-ribonucleotide-RNA + AMP + diphosphate. Catalyzes the conversion of 3'-phosphate to a 2',3'-cyclic phosphodiester at the end of RNA. The mechanism of action of the enzyme occurs in 3 steps: (A) adenylation of the enzyme by ATP; (B) transfer of adenylate to an RNA-N3'P to produce RNA-N3'PP5'A; (C) and attack of the adjacent 2'-hydroxyl on the 3'-phosphorus in the diester linkage to produce the cyclic end product. The biological role of this enzyme is unknown but it is likely to function in some aspects of cellular RNA processing. This is RNA 3'-terminal phosphate cyclase from Saccharolobus islandicus (strain L.S.2.15 / Lassen #1) (Sulfolobus islandicus).